Reading from the N-terminus, the 118-residue chain is UPF0342 protein BpOF4_11360 (118 aa).

The protein belongs to the UPF0342 family.

The sequence is that of UPF0342 protein BpOF4_11360 from Alkalihalophilus pseudofirmus (strain ATCC BAA-2126 / JCM 17055 / OF4) (Bacillus pseudofirmus).